The primary structure comprises 309 residues: Methionyl-tRNA formyltransferase (309 aa).

Residue 107-110 (SLLP) participates in (6S)-5,6,7,8-tetrahydrofolate binding.

It belongs to the Fmt family.

It carries out the reaction L-methionyl-tRNA(fMet) + (6R)-10-formyltetrahydrofolate = N-formyl-L-methionyl-tRNA(fMet) + (6S)-5,6,7,8-tetrahydrofolate + H(+). Functionally, attaches a formyl group to the free amino group of methionyl-tRNA(fMet). The formyl group appears to play a dual role in the initiator identity of N-formylmethionyl-tRNA by promoting its recognition by IF2 and preventing the misappropriation of this tRNA by the elongation apparatus. The polypeptide is Methionyl-tRNA formyltransferase (Borrelia hermsii (strain HS1 / DAH)).